The sequence spans 651 residues: Cytoplasmic tyrosine-protein kinase BMX (651 aa).

A PH domain is found at 4–111; sequence KSILEELLLK…WLKALQKEIR (108 aa). The Btk-type zinc finger occupies 113-149; that stretch reads NPHLLIKYHSGFFVDGKFLCCQQSCKAAPGCTLWEAY. Zn(2+) contacts are provided by histidine 121, cysteine 132, cysteine 133, and cysteine 143. The 97-residue stretch at 272 to 368 folds into the SH2 domain; the sequence is WFAGNISRSQ…GMITRLRHPV (97 aa). The Protein kinase domain maps to 393–646; the sequence is ITLLKELGNG…QLLSAIEPLR (254 aa). Residues 399–407 and lysine 421 contribute to the ATP site; that span reads LGNGQFGVV. Aspartate 512 functions as the Proton acceptor in the catalytic mechanism. Position 542 is a phosphotyrosine; by SRC and autocatalysis (tyrosine 542).

This sequence belongs to the protein kinase superfamily. Tyr protein kinase family. TEC subfamily. Interacts with BCAR1, CAV1, MYD88, PTK2/FAK1, RUFY1, RUFY2, STAT3, TIRAP and TNFRSF1B. The cofactor is Zn(2+). In terms of processing, phosphorylated in response to protein I/II and to LPS. Phosphorylation at Tyr-542 by SRC and by autocatalysis leads to activation and is required for STAT3 phosphorylation by BMX. In terms of tissue distribution, specifically expressed in the endocardium of the developing heart as well as in the endocardium of the left ventricle and in the endothelium of large arteries in adult mice.

The protein localises to the cytoplasm. It catalyses the reaction L-tyrosyl-[protein] + ATP = O-phospho-L-tyrosyl-[protein] + ADP + H(+). With respect to regulation, TEK and vascular endothelial growth factor receptor 1 (FLT1) stimulate BMX tyrosine kinase activity. Activated by integrins through the mediation of PTK2/FAK1. Activated by TNF through the mediation of TNFRSF1B. Its function is as follows. Non-receptor tyrosine kinase that plays central but diverse modulatory roles in various signaling processes involved in the regulation of actin reorganization, cell migration, cell proliferation and survival, cell adhesion, and apoptosis. Participates in signal transduction stimulated by growth factor receptors, cytokine receptors, G-protein coupled receptors, antigen receptors and integrins. Induces tyrosine phosphorylation of BCAR1 in response to integrin regulation. Activation of BMX by integrins is mediated by PTK2/FAK1, a key mediator of integrin signaling events leading to the regulation of actin cytoskeleton and cell motility. Plays a critical role in TNF-induced angiogenesis, and implicated in the signaling of TEK and FLT1 receptors, 2 important receptor families essential for angiogenesis. Required for the phosphorylation and activation of STAT3, a transcription factor involved in cell differentiation. Also involved in interleukin-6 (IL6) induced differentiation. Also plays a role in programming adaptive cytoprotection against extracellular stress in different cell systems, salivary epithelial cells, brain endothelial cells, and dermal fibroblasts. May be involved in regulation of endocytosis through its interaction with an endosomal protein RUFY1. May also play a role in the growth and differentiation of hematopoietic cells; as well as in signal transduction in endocardial and arterial endothelial cells. The protein is Cytoplasmic tyrosine-protein kinase BMX (Bmx) of Mus musculus (Mouse).